The chain runs to 461 residues: Protein-serine O-palmitoleoyltransferase porcupine (461 aa).

The Cytoplasmic portion of the chain corresponds to 1–17 (MATFSRQEFFQQLLQGC). A helical transmembrane segment spans residues 18–38 (LLPTAQQGLDQIWLLLAICLA). At 39-66 (CRLLWRLGLPSYLKHASTVAGGFFSLYH) the chain is on the extracellular side. Residues 67-87 (FFQLHMVWVVLLSLLCYLVLF) form a helical membrane-spanning segment. At 88-95 (LCRHSSHR) the chain is on the cytoplasmic side. Residues 96–116 (GVFLSVTILIYLLMGEMHMVD) traverse the membrane as a helical segment. The Extracellular portion of the chain corresponds to 117 to 152 (TVTWHKMRGAQMIVAMKAVSLGFDLDRGEVGTVPSP). The helical transmembrane segment at 153–173 (VEFMGYLYFVGTIVFGPWISF) threads the bilayer. The Cytoplasmic portion of the chain corresponds to 174 to 198 (HSYLQAVQGRPLSCRWLQKVARSLA). The S-palmitoyl cysteine moiety is linked to residue Cys-187. The chain crosses the membrane as a helical span at residues 199–219 (LALLCLVLSTCVGPYLFPYFI). The Extracellular segment spans residues 220–252 (PLNGDRLLRNKKRKARGTMVRWLRAYESAVSFH). A helical transmembrane segment spans residues 253–273 (FSNYFVGFLSEATATLAGAGF). The Cytoplasmic portion of the chain corresponds to 274 to 337 (TEEKDHLEWD…SAVLVTYAAS (64 aa)). The chain crosses the membrane as a helical span at residues 338–358 (ALLHGFSFHLAAVLLSLAFIT). His-341 is a catalytic residue. Over 359–396 (YVEHVLRKRLARILSACVLSKRCPPDCSHQHRLGLGVR) the chain is Extracellular. Residues 397 to 417 (ALNLLFGALAIFHLAYLGSLF) form a helical membrane-spanning segment. Residues 418–461 (DVDVDDTTEEQGYGMAYTVHKWSELSWASHWVTFGCWIFYRLIG) lie on the Cytoplasmic side of the membrane.

The protein belongs to the membrane-bound acyltransferase family. Porcupine subfamily. Interacts with WNT1, WNT3, WNT3A, WNT4, WNT5A, WNT5B, WNT6, WNT7A and WNT7B. In terms of tissue distribution, isoform 1 is expressed in fetal brain, brain, amygdala, caudate nucleus, cerebellum, hippocampus, pituitary, thalamus, heart, skeletal muscle and testis. Isoform 4 is expressed in amygdala, corpus callosum, hippocampus, spinal cord, kidney, liver, lung, spleen, uterus, testis. Isoform 2 and isoform 3 are expressed in substantia negra, spinal cord, heart and lung.

It is found in the endoplasmic reticulum membrane. The enzyme catalyses [Wnt protein]-L-serine + (9Z)-hexadecenoyl-CoA = [Wnt protein]-O-(9Z)-hexadecenoyl-L-serine + CoA. In terms of biological role, protein-serine O-palmitoleoyltransferase that acts as a key regulator of the Wnt signaling pathway by mediating the attachment of palmitoleate, a 16-carbon monounsaturated fatty acid (C16:1(9Z)), to Wnt proteins. Serine palmitoleoylation of WNT proteins is required for efficient binding to frizzled receptors. The sequence is that of Protein-serine O-palmitoleoyltransferase porcupine from Homo sapiens (Human).